A 226-amino-acid polypeptide reads, in one-letter code: Cytidylate kinase (226 aa).

An ATP-binding site is contributed by 10–18 (GPASSGKST).

Belongs to the cytidylate kinase family. Type 1 subfamily.

It localises to the cytoplasm. It carries out the reaction CMP + ATP = CDP + ADP. It catalyses the reaction dCMP + ATP = dCDP + ADP. The protein is Cytidylate kinase of Streptococcus pyogenes serotype M5 (strain Manfredo).